A 239-amino-acid chain; its full sequence is tRNA (guanine-N(7)-)-methyltransferase (239 aa).

S-adenosyl-L-methionine contacts are provided by Glu69, Glu94, Asp121, and Asp144. Asp144 is an active-site residue. A substrate-binding site is contributed by Lys148. Residues 150–155 (RHNKRR) are interaction with RNA. Residues Asp180 and 217–220 (TKFE) each bind substrate.

This sequence belongs to the class I-like SAM-binding methyltransferase superfamily. TrmB family. As to quaternary structure, monomer.

The catalysed reaction is guanosine(46) in tRNA + S-adenosyl-L-methionine = N(7)-methylguanosine(46) in tRNA + S-adenosyl-L-homocysteine. Its pathway is tRNA modification; N(7)-methylguanine-tRNA biosynthesis. Catalyzes the formation of N(7)-methylguanine at position 46 (m7G46) in tRNA. This is tRNA (guanine-N(7)-)-methyltransferase from Cronobacter sakazakii (strain ATCC BAA-894) (Enterobacter sakazakii).